A 245-amino-acid chain; its full sequence is 2,3-bisphosphoglycerate-dependent phosphoglycerate mutase 1 (245 aa).

Substrate is bound by residues 8–15 (RHGQSLWN), 21–22 (TG), Arg60, 87–90 (ERHY), Lys98, 114–115 (RR), and 183–184 (GN). Catalysis depends on His9, which acts as the Tele-phosphohistidine intermediate. Glu87 serves as the catalytic Proton donor/acceptor.

This sequence belongs to the phosphoglycerate mutase family. BPG-dependent PGAM subfamily.

The catalysed reaction is (2R)-2-phosphoglycerate = (2R)-3-phosphoglycerate. The protein operates within carbohydrate degradation; glycolysis; pyruvate from D-glyceraldehyde 3-phosphate: step 3/5. Functionally, catalyzes the interconversion of 2-phosphoglycerate and 3-phosphoglycerate. The sequence is that of 2,3-bisphosphoglycerate-dependent phosphoglycerate mutase 1 from Bacillus cereus (strain ATCC 10987 / NRS 248).